An 841-amino-acid polypeptide reads, in one-letter code: Follistatin-related protein 4 (841 aa).

Residues 1–22 form the signal peptide; that stretch reads MKPGGFWPHLALLGVSLPAVLG. The interval 29 to 54 is disordered; sequence SRSPNMVPGESQAEETRGFEVTRREG. Residues 42–54 show a composition bias toward basic and acidic residues; sequence EETRGFEVTRREG. The Kazal-like domain occupies 80-134; it reads TTGQPSCQCLEVCRPRYMPVCGSDGRLYGNHCELRRAACLLGKRIVSVHSKDCFL. Cystine bridges form between cysteine 86-cysteine 118, cysteine 92-cysteine 111, and cysteine 100-cysteine 132. 2 EF-hand domains span residues 173 to 208 and 225 to 247; these read QKRL…EQDM and DYNS…IQLS. Residues aspartate 186, aspartate 188, asparagine 190, histidine 192, glutamate 197, aspartate 225, asparagine 227, aspartate 229, serine 231, and glutamate 236 each contribute to the Ca(2+) site. 2 consecutive Ig-like domains span residues 250-336 and 340-425; these read PEDK…VLQV and PVIR…EDIS. Cystine bridges form between cysteine 269–cysteine 320 and cysteine 361–cysteine 412. Residue asparagine 317 is glycosylated (N-linked (GlcNAc...) asparagine).

The protein resides in the secreted. The protein is Follistatin-related protein 4 (Fstl4) of Mus musculus (Mouse).